Consider the following 790-residue polypeptide: Cadherin-20 (790 aa).

Residues 1 to 25 form the signal peptide; the sequence is MSCKRSYHRHCALVYYMVLLDLTNA. Positions 26 to 52 are excised as a propeptide; it reads VFEFSHPLIRDSGNSQSRQLLHHRLKR. Over 26-612 the chain is Extracellular; sequence VFEFSHPLIR…PYTLPISLSR (587 aa). 5 Cadherin domains span residues 54-158, 159-267, 268-382, 383-487, and 487-605; these read WVWN…EPKF, LDGP…PPRF, PQKH…PPVF, GSSF…APTF, and FTKF…EPYT. N-linked (GlcNAc...) asparagine glycosylation is found at asparagine 254, asparagine 283, asparagine 413, asparagine 454, and asparagine 535. A helical membrane pass occupies residues 613-633; it reads GALIAILTCIFVLLVLVLLIL. Over 634–790 the chain is Cytoplasmic; the sequence is SMRRHRKQPY…YGTKDNNGSL (157 aa).

Detected in embryonic posterior neural plate, embryonic neural tube, sulcus limitans and embryonic kidney.

It is found in the cell membrane. Functionally, cadherins are calcium-dependent cell adhesion proteins. They preferentially interact with themselves in a homophilic manner in connecting cells; cadherins may thus contribute to the sorting of heterogeneous cell types. The chain is Cadherin-20 (cdh20) from Xenopus laevis (African clawed frog).